The following is a 127-amino-acid chain: Fluoride-specific ion channel FluC (127 aa).

Transmembrane regions (helical) follow at residues 4 to 24 (SLLAIGLGAMVGAWLRWGLGM), 35 to 55 (PGTLLANLIGGYIIGLAIAFF), 68 to 88 (LLITGFCGGLTTFSTFSAEVV), and 96 to 116 (ILWALGSIALHVSGSLLMTAA). 2 residues coordinate Na(+): glycine 75 and threonine 78.

This sequence belongs to the fluoride channel Fluc/FEX (TC 1.A.43) family.

It localises to the cell inner membrane. The enzyme catalyses fluoride(in) = fluoride(out). With respect to regulation, na(+) is not transported, but it plays an essential structural role and its presence is essential for fluoride channel function. Functionally, fluoride-specific ion channel. Important for reducing fluoride concentration in the cell, thus reducing its toxicity. This Pseudomonas putida (strain W619) protein is Fluoride-specific ion channel FluC.